The following is a 780-amino-acid chain: Cullin-5 (780 aa).

Ser34 carries the post-translational modification Phosphoserine. Thr210 carries the phosphothreonine modification. A Cullin neddylation domain is found at 713-772; that stretch reads LRTRKLYIQIMKMRKKISNAQLQTELVEILKNMFLPQKKMIKEQIEWLIEHKYIRRDESD. Lys724 is covalently cross-linked (Glycyl lysine isopeptide (Lys-Gly) (interchain with G-Cter in NEDD8)).

This sequence belongs to the cullin family. Component of multiple cullin-5-RING E3 ubiquitin-protein ligase complexes (ECS complexes, also named CRL5 complexes) formed of CUL5, Elongin BC (ELOB and ELOC), RNF7/RBX2 and a variable SOCS box domain-containing protein as substrate-specific recognition component. CUL5-containing ECS complexes specifically contain RNF7/RBX2, and not RBX1, as catalytic subunit. Component of the ECS(ASB2) complex with the substrate recognition component ASB2. Component of the ECS(ASB6) complex with the substrate recognition component ASB6. Component of the ECS(ASB7) complex with the substrate recognition component ASB7. Component of the ECS(ASB9) complex with the substrate recognition component ASB9. Component of the ECS(ASB11) complex with the substrate recognition component ASB11. Component of the ECS(ASB12) complex with the substrate recognition component ASB12. Component of the ECS(LRRC41) complex with the substrate recognition component LRRC41. Component of the ECS(SOCS1) complex with the substrate recognition component SOCS1. Component of the ECS(SOCS2) complex with the substrate recognition component SOCS2. Component of the ECS(WSB1) complex with the substrate recognition subunit WSB1. Component of the ECS(SOCS3) complex with the substrate recognition component SOCS3. Component of the ECS(SOCS7) complex with the substrate recognition component SOCS7. Component of the ECS(SPSB1) complex with the substrate recognition component SPSB1. Component of the ECS(SPSB3) complex with the substrate recognition component SPSB3. Component of the ECS(SPSB2) complex with the substrate recognition component SPSB2. Component of the ECS(SPSB4) complex with the substrate recognition component SPSB4. Component of the ECS(RAB40) complex with the substrate recognition subunit RAB40A, RAB40B or RAB40C. Component of the ECS(KLHDC1) complex with the substrate recognition component KLHDC1. Component of the ECS(PCMTD1) complex with the substrate recognition subunit PCMTD1. May also form complexes containing RBX1 and ELOA or VHL; additional evidence is however required to confirm this result in vivo. Interacts (when neddylated) with ARIH2; leading to activate the E3 ligase activity of ARIH2. Interacts with ERCC6; the interaction is induced by DNA damaging agents or inhibitors of RNA polymerase II elongation. Interacts with ELOA (via the BC-box). Interacts (unneddylated form) with DCUN1D1, DCUN1D2, DCUN1D3, DCUN1D4 and DCUN1D5; these interactions promote the cullin neddylation. Post-translationally, neddylated; which enhances the ubiquitination activity of ECS complexes and prevents binding of the inhibitor CAND1. Deneddylated via its interaction with the COP9 signalosome (CSN). As to expression, kidney collecting tubules.

It localises to the nucleus. It participates in protein modification; protein ubiquitination. Core component of multiple cullin-5-RING E3 ubiquitin-protein ligase complexes (ECS complexes, also named CRL5 complexes), which mediate the ubiquitination and subsequent proteasomal degradation of target proteins. Acts a scaffold protein that contributes to catalysis through positioning of the substrate and the ubiquitin-conjugating enzyme. The functional specificity of the E3 ubiquitin-protein ligase complex depends on the variable SOCS box-containing substrate recognition component. Acts as a key regulator of neuron positioning during cortex development: component of various SOCS-containing ECS complexes, such as the ECS(SOCS7) complex, that regulate reelin signaling by mediating ubiquitination and degradation of DAB1. ECS(SOCS1) seems to direct ubiquitination of JAK2. The ECS(SOCS2) complex mediates the ubiquitination and subsequent proteasomal degradation of phosphorylated EPOR and GHR. The ECS(SPSB3) complex catalyzes ubiquitination of nuclear CGAS. ECS(KLHDC1) complex is part of the DesCEND (destruction via C-end degrons) pathway and mediates ubiquitination and degradation of truncated SELENOS selenoprotein produced by failed UGA/Sec decoding, which ends with a glycine. The ECS(ASB9) complex mediates ubiquitination and degradation of CKB. As part of some ECS complex, promotes 'Lys-11'-linked ubiquitination and degradation of BTRC. As part of a multisubunit ECS complex, polyubiquitinates monoubiquitinated POLR2A. As part of the ECS(RAB40C) complex, mediates ANKRD28 ubiquitination and degradation, thereby regulating protein phosphatase 6 (PP6) complex activity and focal adhesion assembly during cell migration. As part of the ECS(RAB40A) complex, mediates RHOU 'Lys-48'-linked ubiquitination and degradation, thus inhibiting focal adhesion disassembly during cell migration. As part of the ECS(RAB40B) complex, mediates LIMA1/EPLIN and RAP2 ubiquitination, thereby regulating actin cytoskeleton dynamics and stress fiber formation during cell migration. May form a cell surface vasopressin receptor. This chain is Cullin-5 (CUL5), found in Oryctolagus cuniculus (Rabbit).